The following is a 141-amino-acid chain: Large ribosomal subunit protein uL11 (141 aa).

This sequence belongs to the universal ribosomal protein uL11 family. In terms of assembly, part of the ribosomal stalk of the 50S ribosomal subunit. Interacts with L10 and the large rRNA to form the base of the stalk. L10 forms an elongated spine to which L12 dimers bind in a sequential fashion forming a multimeric L10(L12)X complex. In terms of processing, one or more lysine residues are methylated.

Its function is as follows. Forms part of the ribosomal stalk which helps the ribosome interact with GTP-bound translation factors. This is Large ribosomal subunit protein uL11 from Ligilactobacillus salivarius (strain UCC118) (Lactobacillus salivarius).